The primary structure comprises 210 residues: MKKGILGKKHGMTQIFDEKGEVIPVTVIEAGPCVVVQKKTVEKDGYNAIQVGFGDVSEKKLNKPLLGHFKKAGVSPKRYLREFRLDDISGYEVGTEIKVDIFKPGDRVDVTGISKGKGFAGVIKRYGARRGPMSHGSKYHRRVGSMGATTDPGRTFKGKKMPGRMGSDRVTIQNLEVVKVDPELNLLVVKGSVPGPKGSLLIIRDSVKSK.

A disordered region spans residues 131 to 165 (GPMSHGSKYHRRVGSMGATTDPGRTFKGKKMPGRM).

Belongs to the universal ribosomal protein uL3 family. As to quaternary structure, part of the 50S ribosomal subunit. Forms a cluster with proteins L14 and L19.

One of the primary rRNA binding proteins, it binds directly near the 3'-end of the 23S rRNA, where it nucleates assembly of the 50S subunit. This chain is Large ribosomal subunit protein uL3, found in Caldanaerobacter subterraneus subsp. tengcongensis (strain DSM 15242 / JCM 11007 / NBRC 100824 / MB4) (Thermoanaerobacter tengcongensis).